The sequence spans 184 residues: Potassium-transporting ATPase KdpC subunit (184 aa).

Residues 6–26 (TAVLYTIISAVFLGLGYPLIM) form a helical membrane-spanning segment.

Belongs to the KdpC family. In terms of assembly, the system is composed of three essential subunits: KdpA, KdpB and KdpC.

It localises to the cell inner membrane. In terms of biological role, part of the high-affinity ATP-driven potassium transport (or Kdp) system, which catalyzes the hydrolysis of ATP coupled with the electrogenic transport of potassium into the cytoplasm. This subunit acts as a catalytic chaperone that increases the ATP-binding affinity of the ATP-hydrolyzing subunit KdpB by the formation of a transient KdpB/KdpC/ATP ternary complex. In Acidobacterium capsulatum (strain ATCC 51196 / DSM 11244 / BCRC 80197 / JCM 7670 / NBRC 15755 / NCIMB 13165 / 161), this protein is Potassium-transporting ATPase KdpC subunit.